The sequence spans 196 residues: Imidazole glycerol phosphate synthase subunit HisH (196 aa).

Residues 2–196 (KVVILDTGCA…AQLLKNFLEM (195 aa)) enclose the Glutamine amidotransferase type-1 domain. The active-site Nucleophile is cysteine 77. Catalysis depends on residues histidine 178 and glutamate 180.

Heterodimer of HisH and HisF.

The protein localises to the cytoplasm. It catalyses the reaction 5-[(5-phospho-1-deoxy-D-ribulos-1-ylimino)methylamino]-1-(5-phospho-beta-D-ribosyl)imidazole-4-carboxamide + L-glutamine = D-erythro-1-(imidazol-4-yl)glycerol 3-phosphate + 5-amino-1-(5-phospho-beta-D-ribosyl)imidazole-4-carboxamide + L-glutamate + H(+). The enzyme catalyses L-glutamine + H2O = L-glutamate + NH4(+). The protein operates within amino-acid biosynthesis; L-histidine biosynthesis; L-histidine from 5-phospho-alpha-D-ribose 1-diphosphate: step 5/9. IGPS catalyzes the conversion of PRFAR and glutamine to IGP, AICAR and glutamate. The HisH subunit catalyzes the hydrolysis of glutamine to glutamate and ammonia as part of the synthesis of IGP and AICAR. The resulting ammonia molecule is channeled to the active site of HisF. The polypeptide is Imidazole glycerol phosphate synthase subunit HisH (Pectobacterium atrosepticum (strain SCRI 1043 / ATCC BAA-672) (Erwinia carotovora subsp. atroseptica)).